Consider the following 85-residue polypeptide: U4-theraphotoxin-Hhn1a (85 aa).

The first 22 residues, 1-22 (MKVTLIAILTCAAVLVLHTTAA), serve as a signal peptide directing secretion. A propeptide spanning residues 23–48 (EELEAESQPMEVGMPDTELAAVDEER) is cleaved from the precursor. 3 cysteine pairs are disulfide-bonded: C52/C66, C56/C77, and C71/C82.

Belongs to the neurotoxin 12 (Hwtx-2) family. 02 (Hwtx-2) subfamily. In terms of assembly, monomer. In terms of tissue distribution, expressed by the venom gland.

The protein resides in the secreted. In terms of biological role, neurotoxin active on both insects and mammals. The sequence is that of U4-theraphotoxin-Hhn1a from Cyriopagopus hainanus (Chinese bird spider).